The sequence spans 358 residues: Nuclear receptor subfamily 1 group I member 3 (358 aa).

A DNA-binding region (nuclear receptor) is located at residues 18–93 (PRNCVVCGDR…VGMRKDMILS (76 aa)). The NR C4-type zinc finger occupies 21-41 (CVVCGDRATGYHFHALTCEGC). A Phosphothreonine; by PKC modification is found at T48. The NR C4-type zinc-finger motif lies at 57–81 (CPFAGRCEVSKAQRRHCPACRLQKC). The region spanning 119–358 (QQKELVQILL…MTPLLGEICS (240 aa)) is the NR LBD domain.

The protein belongs to the nuclear hormone receptor family. NR1 subfamily. Heterodimer of NR1I3 and RXR. Interacts with PSMC4. Interacts with ECT2. Directly interacts with DNAJC7; this complex may also include HSP90. Interacts with CRY1. Interacts with CRY2 in a ligand-dependent manner. Phosphorylated at Thr-48 by PKC, dephosphorylation of Thr-48 is required for nuclear translocation and activation. As to expression, predominantly expressed in liver.

It localises to the nucleus. The protein localises to the cytoplasm. It is found in the cytoskeleton. In terms of biological role, binds and transactivates the retinoic acid response elements that control expression of the retinoic acid receptor beta 2 and alcohol dehydrogenase 3 genes. Transactivates both the phenobarbital responsive element module of the human CYP2B6 gene and the CYP3A4 xenobiotic response element. The sequence is that of Nuclear receptor subfamily 1 group I member 3 (Nr1i3) from Mus musculus (Mouse).